Consider the following 160-residue polypeptide: Cyclic pyranopterin monophosphate synthase (160 aa).

Substrate-binding positions include 74–76 (LSH) and 112–113 (ME). Asp-127 is an active-site residue.

This sequence belongs to the MoaC family. Homohexamer; trimer of dimers.

It carries out the reaction (8S)-3',8-cyclo-7,8-dihydroguanosine 5'-triphosphate = cyclic pyranopterin phosphate + diphosphate. It functions in the pathway cofactor biosynthesis; molybdopterin biosynthesis. Functionally, catalyzes the conversion of (8S)-3',8-cyclo-7,8-dihydroguanosine 5'-triphosphate to cyclic pyranopterin monophosphate (cPMP). The protein is Cyclic pyranopterin monophosphate synthase of Geobacter metallireducens (strain ATCC 53774 / DSM 7210 / GS-15).